We begin with the raw amino-acid sequence, 653 residues long: Sodium-dependent nutrient amino acid transporter 1 (653 aa).

Residues 1 to 55 (MELKGVHQQNGTSNGTGAAGTEGESPPPAPAPATAEAAASLETTTEKVDAEQQKT) form a disordered region. Residues 1–59 (MELKGVHQQNGTSNGTGAAGTEGESPPPAPAPATAEAAASLETTTEKVDAEQQKTERTN) are Cytoplasmic-facing. 2 stretches are compositionally biased toward low complexity: residues 10–24 (NGTS…TEGE) and 32–43 (PATAEAAASLET). Over residues 44-55 (TTEKVDAEQQKT) the composition is skewed to basic and acidic residues. Helical transmembrane passes span 60–80 (WGNG…LGNV), 93–113 (GAFL…MYYL), 125–145 (TVKI…QAFA), and 146–166 (TICI…YLFV). N-linked (GlcNAc...) asparagine glycosylation is found at N202 and N205. Transmembrane regions (helical) follow at residues 241–261 (PDWK…LVIM), 270–290 (AAYF…VRAV), 319–339 (AVVQ…MFAS), 353–373 (IVTT…FAIL), 413–433 (LFSV…IVAL), 459–479 (ICGF…ILTL), 486–506 (TYVV…IYGM), 528–548 (CWSF…MVTI), and 565–585 (AGWL…MWYI).

Belongs to the sodium:neurotransmitter symporter (SNF) (TC 2.A.22) family.

It localises to the membrane. Unusual broad substrate spectrum amino acid:sodium cotransporter that promotes absorption of the D isomers of essential amino acids. Neutral amino acids are the preferred substrates, especially methionine and phenylalanine. This is Sodium-dependent nutrient amino acid transporter 1 from Drosophila pseudoobscura pseudoobscura (Fruit fly).